A 411-amino-acid polypeptide reads, in one-letter code: Heterogeneous nuclear ribonucleoprotein 1 (411 aa).

The 77-residue stretch at 6–82 (GKLFVGGISW…REVDVKRAMS (77 aa)) folds into the RRM 1 domain. Disordered stretches follow at residues 81-103 (MSRE…SSGG), 183-221 (KRAL…DGRM), and 358-411 (AAYG…RQGQ). The segment covering 87 to 101 (QVSGRTGNLNTSRSS) has biased composition (polar residues). Residues 110 to 187 (KKIFVGGLPP…KQVEVKRALP (78 aa)) enclose the RRM 2 domain. 3 stretches are compositionally biased toward gly residues: residues 192 to 212 (PGGG…GYGG), 362 to 387 (VVGG…GYGD), and 397 to 411 (GYGG…RQGQ). The segment at 341-390 (GYGYGGYSGSDSGYGNQAAYGVVGGRPSGGGSNNPGSGGYMGGGYGDGSW) is nuclear targeting sequence (M9).

As to quaternary structure, component of the spliceosome. Interacts with TRN1.

It localises to the nucleus. The protein resides in the cytoplasm. Its function is as follows. Involved with pre-mRNA processing. Forms complexes (ribonucleosomes) with at least 20 other different hnRNP and heterogeneous nuclear RNA in the nucleus. Involved in the packaging of pre-mRNA into hnRNP particles, transport of poly(A) mRNA from the nucleus to the cytoplasm and may modulate splice site selection. The polypeptide is Heterogeneous nuclear ribonucleoprotein 1 (RNP1) (Arabidopsis thaliana (Mouse-ear cress)).